Reading from the N-terminus, the 538-residue chain is Syncytin-1 (538 aa).

An N-terminal signal peptide occupies residues 1–20; sequence MALPYHIFLFTVLLPSFTLT. The Extracellular portion of the chain corresponds to 21-443; sequence APPPCRCMTS…NTGPWGLLSQ (423 aa). N169 carries N-linked (GlcNAc...) asparagine glycosylation. The CXXC signature appears at 186–189; the sequence is CWIC. Intrachain disulfides connect C186/C189, C186/C405, and C397/C404. N-linked (GlcNAc...) asparagine glycosylation is found at N208, N214, N234, N242, and N281. Positions 320-340 are fusion peptide; the sequence is ILPFVIGAGVLGALGTGIGGI. The interval 380–396 is immunosuppression; it reads LQNRRALDLLTAERGGT. A CX6CC motif is present at residues 397–406; that stretch reads CLFLGEECCY. Residue N409 is glycosylated (N-linked (GlcNAc...) asparagine). Residues 444–464 form a helical membrane-spanning segment; the sequence is WMPWILPFLGPLAAIILLLLF. Positions 465–484 are essential for the fusiogenic function; that stretch reads GPCIFNLLVNFVSSRIEAVK. Over 465–538 the chain is Cytoplasmic; it reads GPCIFNLLVN…LLRPNSAGSS (74 aa). Positions 496–538 are disordered; the sequence is KIYRRPLDRPASPRSDVNDIKGTPPEEISAAQPLLRPNSAGSS.

The protein belongs to the gamma type-C retroviral envelope protein family. HERV class-I W env subfamily. As to quaternary structure, the mature envelope protein (Env) consists of a trimer of SU-TM heterodimers attached probably by a labile interchain disulfide bond. Interacts with the C-type lectin CD209/DC-SIGN. In terms of processing, specific enzymatic cleavages in vivo yield mature proteins. Envelope glycoproteins are synthesized as an inactive precursor that is heavily N-glycosylated and processed likely by furin in the Golgi to yield the mature SU and TM proteins. The cleavage site between SU and TM requires the minimal sequence [KR]-X-[KR]-R. The intracytoplasmic tail cleavage by the viral protease that is required for the fusiogenic activity of some retroviruses envelope proteins seems to have been lost during evolution. The CXXC motif is highly conserved across a broad range of retroviral envelope proteins. It is thought to participate in the formation of a labile disulfide bond possibly with the CX6CC motif present in the transmembrane protein. Isomerization of the intersubunit disulfide bond to an SU intrachain disulfide bond is thought to occur upon receptor recognition in order to allow membrane fusion. In terms of tissue distribution, expressed at higher level in placental syncytiotrophoblast. Expressed at intermediate level in testis. Seems also to be found at low level in adrenal tissue, bone marrow, breast, colon, kidney, ovary, prostate, skin, spleen, thymus, thyroid, brain and trachea. Both mRNA and protein levels are significantly increased in the brain of individuals with multiple sclerosis, particularly in astrocytes and microglia.

The protein resides in the cell membrane. The protein localises to the virion. This endogenous retroviral envelope protein has retained its original fusogenic properties and participates in trophoblast fusion and the formation of a syncytium during placenta morphogenesis. May induce fusion through binding of SLC1A4 and SLC1A5. In terms of biological role, endogenous envelope proteins may have kept, lost or modified their original function during evolution. Retroviral envelope proteins mediate receptor recognition and membrane fusion during early infection. The surface protein (SU) mediates receptor recognition, while the transmembrane protein (TM) acts as a class I viral fusion protein. The protein may have at least 3 conformational states: pre-fusion native state, pre-hairpin intermediate state, and post-fusion hairpin state. During viral and target cell membrane fusion, the coiled coil regions (heptad repeats) assume a trimer-of-hairpins structure, positioning the fusion peptide in close proximity to the C-terminal region of the ectodomain. The formation of this structure appears to drive apposition and subsequent fusion of membranes. This is Syncytin-1 (ERVW-1) from Homo sapiens (Human).